The primary structure comprises 104 residues: Nucleoid-associated protein EF_2780 (104 aa).

Belongs to the YbaB/EbfC family. Homodimer.

The protein localises to the cytoplasm. It is found in the nucleoid. In terms of biological role, binds to DNA and alters its conformation. May be involved in regulation of gene expression, nucleoid organization and DNA protection. This chain is Nucleoid-associated protein EF_2780, found in Enterococcus faecalis (strain ATCC 700802 / V583).